Reading from the N-terminus, the 185-residue chain is MINEIKKDTQQRMEKSLEALKSHISKIRTGRAQPSLLDGIQVEYYGSATPLRQVANVVAEDARTLAVNVFDRSLISAVEKAILTSDLGLNPSSAGATIRVPLPALTEERRRDLIKIVKNEGEQGKIAIRNVRRDANDQIKALLKDKEISEDEERKAQDEIQKITDGYVKKVDEVLMAKEKELLDF.

This sequence belongs to the RRF family.

It is found in the cytoplasm. Functionally, responsible for the release of ribosomes from messenger RNA at the termination of protein biosynthesis. May increase the efficiency of translation by recycling ribosomes from one round of translation to another. The polypeptide is Ribosome-recycling factor (Haemophilus ducreyi (strain 35000HP / ATCC 700724)).